Reading from the N-terminus, the 205-residue chain is Small ribosomal subunit protein uS4 (205 aa).

A compositionally biased stretch (basic and acidic residues) spans 1–16 (MSKRESSKYKIDRRMG). A disordered region spans residues 1-46 (MSKRESSKYKIDRRMGENIWGRPKSPVNRREYGPGQHGQRRKSKLS). The 64-residue stretch at 94-157 (SRLDAIVYRA…KQLVTVLEAV (64 aa)) folds into the S4 RNA-binding domain.

The protein belongs to the universal ribosomal protein uS4 family. As to quaternary structure, part of the 30S ribosomal subunit. Contacts protein S5. The interaction surface between S4 and S5 is involved in control of translational fidelity.

Its function is as follows. One of the primary rRNA binding proteins, it binds directly to 16S rRNA where it nucleates assembly of the body of the 30S subunit. Functionally, with S5 and S12 plays an important role in translational accuracy. This is Small ribosomal subunit protein uS4 from Sinorhizobium medicae (strain WSM419) (Ensifer medicae).